We begin with the raw amino-acid sequence, 511 residues long: Probable mannosyl-oligosaccharide alpha-1,2-mannosidase 1B (511 aa).

An N-terminal signal peptide occupies residues 1-18; that stretch reads MHLPSLSLAWALAGSSLA. Asn90 and Asn177 each carry an N-linked (GlcNAc...) asparagine glycan. Cys327 and Cys356 form a disulfide bridge. The Proton donor role is filled by Glu370. Asn433 carries an N-linked (GlcNAc...) asparagine glycan. Thr501 lines the Ca(2+) pocket.

This sequence belongs to the glycosyl hydrolase 47 family. As to quaternary structure, monomer. Requires Ca(2+) as cofactor. Mg(2+) serves as cofactor.

It localises to the cytoplasmic vesicle lumen. It carries out the reaction N(4)-(alpha-D-Man-(1-&gt;2)-alpha-D-Man-(1-&gt;2)-alpha-D-Man-(1-&gt;3)-[alpha-D-Man-(1-&gt;2)-alpha-D-Man-(1-&gt;3)-[alpha-D-Man-(1-&gt;2)-alpha-D-Man-(1-&gt;6)]-alpha-D-Man-(1-&gt;6)]-beta-D-Man-(1-&gt;4)-beta-D-GlcNAc-(1-&gt;4)-beta-D-GlcNAc)-L-asparaginyl-[protein] (N-glucan mannose isomer 9A1,2,3B1,2,3) + 4 H2O = N(4)-(alpha-D-Man-(1-&gt;3)-[alpha-D-Man-(1-&gt;3)-[alpha-D-Man-(1-&gt;6)]-alpha-D-Man-(1-&gt;6)]-beta-D-Man-(1-&gt;4)-beta-D-GlcNAc-(1-&gt;4)-beta-D-GlcNAc)-L-asparaginyl-[protein] (N-glucan mannose isomer 5A1,2) + 4 beta-D-mannose. It catalyses the reaction N(4)-(alpha-D-Man-(1-&gt;2)-alpha-D-Man-(1-&gt;2)-alpha-D-Man-(1-&gt;3)-[alpha-D-Man-(1-&gt;3)-[alpha-D-Man-(1-&gt;2)-alpha-D-Man-(1-&gt;6)]-alpha-D-Man-(1-&gt;6)]-beta-D-Man-(1-&gt;4)-beta-D-GlcNAc-(1-&gt;4)-beta-D-GlcNAc)-L-asparaginyl-[protein] (N-glucan mannose isomer 8A1,2,3B1,3) + 3 H2O = N(4)-(alpha-D-Man-(1-&gt;3)-[alpha-D-Man-(1-&gt;3)-[alpha-D-Man-(1-&gt;6)]-alpha-D-Man-(1-&gt;6)]-beta-D-Man-(1-&gt;4)-beta-D-GlcNAc-(1-&gt;4)-beta-D-GlcNAc)-L-asparaginyl-[protein] (N-glucan mannose isomer 5A1,2) + 3 beta-D-mannose. Its pathway is protein modification; protein glycosylation. In terms of biological role, involved in the maturation of Asn-linked oligosaccharides. Progressively trims alpha-1,2-linked mannose residues from Man(9)GlcNAc(2) to produce Man(5)GlcNAc(2). In Aspergillus clavatus (strain ATCC 1007 / CBS 513.65 / DSM 816 / NCTC 3887 / NRRL 1 / QM 1276 / 107), this protein is Probable mannosyl-oligosaccharide alpha-1,2-mannosidase 1B (mns1B).